The primary structure comprises 289 residues: Glycine--tRNA ligase alpha subunit (289 aa).

It belongs to the class-II aminoacyl-tRNA synthetase family. As to quaternary structure, tetramer of two alpha and two beta subunits.

It is found in the cytoplasm. The enzyme catalyses tRNA(Gly) + glycine + ATP = glycyl-tRNA(Gly) + AMP + diphosphate. This Rickettsia bellii (strain OSU 85-389) protein is Glycine--tRNA ligase alpha subunit.